A 799-amino-acid polypeptide reads, in one-letter code: Disintegrin and metalloproteinase domain-containing protein B (799 aa).

Residues Met1 to Ala23 form the signal peptide. Residues Arg24 to Pro707 lie on the Extracellular side of the membrane. Asn33, Asn227, Asn228, Asn314, and Asn408 each carry an N-linked (GlcNAc...) asparagine glycan. Residues Lys272–Thr511 enclose the Peptidase M12B domain. 3 cysteine pairs are disulfide-bonded: Cys396/Cys496, Cys449/Cys460, and Cys581/Cys601. Residue His432 coordinates Zn(2+). Glu433 is an active-site residue. Residues His436 and His442 each contribute to the Zn(2+) site. The Disintegrin domain occupies Gly520–Asp609. A helical transmembrane segment spans residues Ile708 to Ile728. Over Cys729–Ala799 the chain is Cytoplasmic. A disordered region spans residues Val753 to Ala799. Positions Asn776–Tyr789 are enriched in pro residues.

The cofactor is Zn(2+).

It is found in the membrane. Functionally, probable zinc protease. The protein is Disintegrin and metalloproteinase domain-containing protein B (ADM-B) of Arthroderma benhamiae (strain ATCC MYA-4681 / CBS 112371) (Trichophyton mentagrophytes).